We begin with the raw amino-acid sequence, 499 residues long: WD repeat-containing protein 55 homolog (499 aa).

A disordered region spans residues 1-130; sequence MHTHNNFKTP…EATFDLDVDD (130 aa). Acidic residues-rich tracts occupy residues 12–23 and 31–48; these read DEDELDDLDEDM and IEQEVLNESDSDNDEYDL. Residues 91 to 103 show a composition bias toward low complexity; the sequence is DDAGGASAGGATS. Over residues 113 to 122 the composition is skewed to polar residues; that stretch reads PSGSNRQSEA. 6 WD repeats span residues 154-193, 198-237, 241-279, 282-321, 324-363, and 408-447; these read KLEDFITDICFHPDRDIIALATIIGDVHLYEYDNEANKLL, VHSKACRDVEFTEDGRFLLTCSKDKCVMVTDMETEKLKKL, AHDDAINTLHVLNENLFATGDDAGTVKLWDLRTKNAIFE, ELEDQITQLTTNDQNKLLLATSADGYLTTFNIAARKMYVQ, PYEEELSCMGIYRGDSKLVVGTSKGRLYTYNWGQFGYHCD, and QHNMPIESLDVNSSGELIASSSHNNDVRFWNVKYFEDFGD. A disordered region spans residues 480–499; that stretch reads TKEDADDDDHDPSAGPSNMA.

This sequence belongs to the WD repeat WDR55 family.

This chain is WD repeat-containing protein 55 homolog, found in Drosophila yakuba (Fruit fly).